The sequence spans 65 residues: Metallothionein-like protein type 3 (65 aa).

Belongs to the metallothionein superfamily. Type 15 family.

Functionally, metallothioneins have a high content of cysteine residues that bind various heavy metals. The polypeptide is Metallothionein-like protein type 3 (Carica papaya (Papaya)).